We begin with the raw amino-acid sequence, 96 residues long: C-C motif chemokine 20 (96 aa).

An N-terminal signal peptide occupies residues 1-26; sequence MACKHLPFLALAGVLLAYLCSQSEAA. 2 disulfide bridges follow: Cys31–Cys58 and Cys32–Cys74.

This sequence belongs to the intercrine beta (chemokine CC) family. As to expression, low levels in thymus and lung.

It is found in the secreted. Functionally, acts as a ligand for C-C chemokine receptor CCR6. Signals through binding and activation of CCR6 and induces a strong chemotactic response and mobilization of intracellular calcium ions. The ligand-receptor pair CCL20-CCR6 is responsible for the chemotaxis of dendritic cells (DC), effector/memory T-cells and B-cells and plays an important role at skin and mucosal surfaces under homeostatic and inflammatory conditions, as well as in pathology, including cancer and autoimmune diseases. CCL20 acts as a chemotactic factor that attracts lymphocytes and, slightly, neutrophils, but not monocytes. Involved in the recruitment of both the pro-inflammatory IL17 producing helper T-cells (Th17) and the regulatory T-cells (Treg) to sites of inflammation. Required for optimal migration of thymic natural regulatory T cells (nTregs) and DN1 early thymocyte progenitor cells. Positively regulates sperm motility and chemotaxis via its binding to CCR6 which triggers Ca2+ mobilization in the sperm which is important for its motility. May be involved in formation and function of the mucosal lymphoid tissues by attracting lymphocytes and dendritic cells towards epithelial cells. The sequence is that of C-C motif chemokine 20 (Ccl20) from Rattus norvegicus (Rat).